The primary structure comprises 114 residues: U17-barytoxin-Tl1a (114 aa).

Residues 1–20 (MKTIIVFLSLLVLATKFGDA) form the signal peptide. Residues 21–74 (NEGVNQEQMKEVIQNEFREDFLNEMAAMSLLQQLEAIESTLLEKEADRNSRQKR) constitute a propeptide that is removed on maturation. Intrachain disulfides connect Cys75–Cys88, Cys82–Cys93, and Cys87–Cys108.

The protein belongs to the neurotoxin 14 (magi-1) family. 03 (ICK-30-40) subfamily. In terms of tissue distribution, expressed by the venom gland.

The protein resides in the secreted. In terms of biological role, ion channel inhibitor. The protein is U17-barytoxin-Tl1a of Trittame loki (Brush-footed trapdoor spider).